A 256-amino-acid polypeptide reads, in one-letter code: MSDAVVAVGEPLRDLAARLGLAWQAEGDATAALRLAMTPEGLALSGEARHYGAPIRVDFTAGKAAHRRRFGGGRGQLVAKACGLARGVTPSIVDATAGLGRDAFVLATLGAEVLLIERVAAIYALLEDGLGRASANAETAEIAARMRVAQGDAARELASLVARHDIAPQVVHLDPMFPHRDKSALVKKEMRVFRDLAGDDDDAPRLLEAALDVASHRVVVKRPRRAPPIEGPAPHHMLEGKTSRYDLYVHRSLKPE.

S-adenosyl-L-methionine contacts are provided by residues 101–102 (RD), 117–118 (ER), and Asp174.

The protein belongs to the methyltransferase superfamily. RsmJ family.

Its subcellular location is the cytoplasm. The catalysed reaction is guanosine(1516) in 16S rRNA + S-adenosyl-L-methionine = N(2)-methylguanosine(1516) in 16S rRNA + S-adenosyl-L-homocysteine + H(+). Specifically methylates the guanosine in position 1516 of 16S rRNA. The chain is Ribosomal RNA small subunit methyltransferase J from Chromohalobacter salexigens (strain ATCC BAA-138 / DSM 3043 / CIP 106854 / NCIMB 13768 / 1H11).